The sequence spans 144 residues: Large ribosomal subunit protein uL15 (144 aa).

Positions Met-1–Arg-13 are enriched in basic and acidic residues. Residues Met-1 to Gly-47 form a disordered region. Residues Asp-23–Gln-35 are compositionally biased toward gly residues.

The protein belongs to the universal ribosomal protein uL15 family. In terms of assembly, part of the 50S ribosomal subunit.

Its function is as follows. Binds to the 23S rRNA. The sequence is that of Large ribosomal subunit protein uL15 from Levilactobacillus brevis (strain ATCC 367 / BCRC 12310 / CIP 105137 / JCM 1170 / LMG 11437 / NCIMB 947 / NCTC 947) (Lactobacillus brevis).